We begin with the raw amino-acid sequence, 152 residues long: Large ribosomal subunit protein uL15 (152 aa).

A disordered region spans residues 31-58; it reads GASCGFGMRGQKSRSGRPTRPGFEGGQM.

It belongs to the universal ribosomal protein uL15 family. Part of the 50S ribosomal subunit.

Functionally, binds to the 23S rRNA. The sequence is that of Large ribosomal subunit protein uL15 from Parasynechococcus marenigrum (strain WH8102).